We begin with the raw amino-acid sequence, 123 residues long: Ribosome-binding factor A (123 aa).

This sequence belongs to the RbfA family. Monomer. Binds 30S ribosomal subunits, but not 50S ribosomal subunits or 70S ribosomes.

The protein resides in the cytoplasm. Its function is as follows. One of several proteins that assist in the late maturation steps of the functional core of the 30S ribosomal subunit. Associates with free 30S ribosomal subunits (but not with 30S subunits that are part of 70S ribosomes or polysomes). Required for efficient processing of 16S rRNA. May interact with the 5'-terminal helix region of 16S rRNA. This is Ribosome-binding factor A from Rickettsia bellii (strain OSU 85-389).